Consider the following 665-residue polypeptide: UvrABC system protein C (665 aa).

The 80-residue stretch at 16 to 95 folds into the GIY-YIG domain; sequence ESPGVYRFRD…IKQYDPRFNV (80 aa). In terms of domain architecture, UVR spans 208-243; it reads DLMVRRLEREMADASAELEFERAARLRDDLAALRRA. Residues 470 to 507 form a disordered region; that stretch reads EAGVESAGDPATPAGPASTGPGVPDEPRVGTLVDPTTG. Residues 475–491 show a composition bias toward low complexity; it reads SAGDPATPAGPASTGPG.

This sequence belongs to the UvrC family. As to quaternary structure, interacts with UvrB in an incision complex.

The protein resides in the cytoplasm. Its function is as follows. The UvrABC repair system catalyzes the recognition and processing of DNA lesions. UvrC both incises the 5' and 3' sides of the lesion. The N-terminal half is responsible for the 3' incision and the C-terminal half is responsible for the 5' incision. This Salinispora tropica (strain ATCC BAA-916 / DSM 44818 / JCM 13857 / NBRC 105044 / CNB-440) protein is UvrABC system protein C.